Reading from the N-terminus, the 768-residue chain is Calcium up-regulated protein G (768 aa).

The tract at residues 1–22 is disordered; that stretch reads MINIEDISKSSNQSEEKQLKST. Ricin B-type lectin domains follow at residues 1–107 and 100–248; these read MINI…WTID and KTQI…WGIN.

This sequence belongs to the cup family.

The protein resides in the cytoplasm. It localises to the membrane. May play an important role in stabilizing and/or regulating the cell membrane during Ca(2+) stress or certain stages of development. In Dictyostelium discoideum (Social amoeba), this protein is Calcium up-regulated protein G (cupG).